The following is a 425-amino-acid chain: Glutamate-1-semialdehyde 2,1-aminomutase (425 aa).

An N6-(pyridoxal phosphate)lysine modification is found at lysine 265.

This sequence belongs to the class-III pyridoxal-phosphate-dependent aminotransferase family. HemL subfamily. As to quaternary structure, homodimer. Requires pyridoxal 5'-phosphate as cofactor.

The protein localises to the cytoplasm. It carries out the reaction (S)-4-amino-5-oxopentanoate = 5-aminolevulinate. It participates in porphyrin-containing compound metabolism; protoporphyrin-IX biosynthesis; 5-aminolevulinate from L-glutamyl-tRNA(Glu): step 2/2. The protein is Glutamate-1-semialdehyde 2,1-aminomutase of Thiobacillus denitrificans (strain ATCC 25259 / T1).